A 389-amino-acid polypeptide reads, in one-letter code: Alcohol dehydrogenase-like 5 (389 aa).

The Zn(2+) site is built by Cys54, Thr56, His77, Cys107, Cys110, Cys113, Cys121, and Cys186. An alcohol-binding residues include Thr56 and His77. Residue Thr56 coordinates NAD(+). Residues 211–216 (GLGAVG), Asp235, Lys240, 305–307 (LGI), Phe332, and Arg382 each bind NAD(+).

The protein belongs to the zinc-containing alcohol dehydrogenase family. Class-III subfamily. In terms of assembly, homodimer. Zn(2+) serves as cofactor.

The protein localises to the cytoplasm. The catalysed reaction is a primary alcohol + NAD(+) = an aldehyde + NADH + H(+). It catalyses the reaction a secondary alcohol + NAD(+) = a ketone + NADH + H(+). The protein is Alcohol dehydrogenase-like 5 of Arabidopsis thaliana (Mouse-ear cress).